A 205-amino-acid polypeptide reads, in one-letter code: LexA repressor (205 aa).

The segment at residues 28-48 (RAEIAHKLGFRSANSAEEHLK) is a DNA-binding region (H-T-H motif). Residues Ser122 and Lys159 each act as for autocatalytic cleavage activity in the active site.

Belongs to the peptidase S24 family. As to quaternary structure, homodimer.

It carries out the reaction Hydrolysis of Ala-|-Gly bond in repressor LexA.. Represses a number of genes involved in the response to DNA damage (SOS response), including recA and lexA. In the presence of single-stranded DNA, RecA interacts with LexA causing an autocatalytic cleavage which disrupts the DNA-binding part of LexA, leading to derepression of the SOS regulon and eventually DNA repair. This Idiomarina loihiensis (strain ATCC BAA-735 / DSM 15497 / L2-TR) protein is LexA repressor.